The chain runs to 398 residues: Ubiquitin carboxyl-terminal hydrolase 17-like protein 6 (398 aa).

In terms of domain architecture, USP spans 80–375 (AGLQNMGNTC…QAYVLFYIQK (296 aa)). C89 serves as the catalytic Nucleophile. H334 acts as the Proton acceptor in catalysis.

The protein belongs to the peptidase C19 family. USP17 subfamily.

Its subcellular location is the nucleus. The protein resides in the cytoplasm. The catalysed reaction is Thiol-dependent hydrolysis of ester, thioester, amide, peptide and isopeptide bonds formed by the C-terminal Gly of ubiquitin (a 76-residue protein attached to proteins as an intracellular targeting signal).. Deubiquitinating enzyme that removes conjugated ubiquitin from specific proteins to regulate different cellular processes that may include cell proliferation, progression through the cell cycle, cell migration, and the cellular response to viral infection. Seems to be non-functional in the regulation of apoptosis. The chain is Ubiquitin carboxyl-terminal hydrolase 17-like protein 6 (USP17L6P) from Homo sapiens (Human).